Consider the following 620-residue polypeptide: MAU2 chromatid cohesion factor homolog (620 aa).

TPR repeat units follow at residues 90–123 (FDTA…SQHN), 445–478 (GSFY…ANAE), and 485–518 (SCSL…ASKI).

This sequence belongs to the SCC4/mau-2 family. Component of the cohesin loading complex.

Its subcellular location is the nucleus. The protein resides in the nucleoplasm. In terms of biological role, required for association of the cohesin complex with chromatin during interphase. Plays a role in sister chromatid cohesion and normal progression through prometaphase. This chain is MAU2 chromatid cohesion factor homolog, found in Aedes aegypti (Yellowfever mosquito).